A 120-amino-acid polypeptide reads, in one-letter code: Immunoglobulin kappa variable 2D-28 (120 aa).

A signal peptide spans Met1–Ser19. In terms of domain architecture, Ig-like spans Gly20–Pro120. A framework-1 region spans residues Asp21–Cys43. Cysteines 43 and 113 form a disulfide. The complementarity-determining-1 stretch occupies residues Arg44 to Asp59. The interval Trp60–Tyr74 is framework-2. The segment at Leu75–Ser81 is complementarity-determining-2. Positions Gly82–Cys113 are framework-3. Residues Met114–Pro120 form a complementarity-determining-3 region.

Immunoglobulins are composed of two identical heavy chains and two identical light chains; disulfide-linked.

It is found in the secreted. It localises to the cell membrane. Functionally, v region of the variable domain of immunoglobulin light chains that participates in the antigen recognition. Immunoglobulins, also known as antibodies, are membrane-bound or secreted glycoproteins produced by B lymphocytes. In the recognition phase of humoral immunity, the membrane-bound immunoglobulins serve as receptors which, upon binding of a specific antigen, trigger the clonal expansion and differentiation of B lymphocytes into immunoglobulins-secreting plasma cells. Secreted immunoglobulins mediate the effector phase of humoral immunity, which results in the elimination of bound antigens. The antigen binding site is formed by the variable domain of one heavy chain, together with that of its associated light chain. Thus, each immunoglobulin has two antigen binding sites with remarkable affinity for a particular antigen. The variable domains are assembled by a process called V-(D)-J rearrangement and can then be subjected to somatic hypermutations which, after exposure to antigen and selection, allow affinity maturation for a particular antigen. This chain is Immunoglobulin kappa variable 2D-28, found in Homo sapiens (Human).